Reading from the N-terminus, the 117-residue chain is MESLVKYVQDEFVDRKDLPEFSAGDTITVYYEIKEGQKTRTQFFRGVVIQKRGTGSSQTFTIRKMSGTVGVERIFPINLPAIQKIEINKKGSVRRARIFYFRGLTGKKARIKEAIRK.

Belongs to the bacterial ribosomal protein bL19 family.

Functionally, this protein is located at the 30S-50S ribosomal subunit interface and may play a role in the structure and function of the aminoacyl-tRNA binding site. This is Large ribosomal subunit protein bL19 from Christiangramia forsetii (strain DSM 17595 / CGMCC 1.15422 / KT0803) (Gramella forsetii).